A 287-amino-acid chain; its full sequence is Polyamine aminopropyltransferase (287 aa).

Residues 5 to 238 (EIWYETLHAN…GIMTFAWASQ (234 aa)) form the PABS domain. Q33 is an S-methyl-5'-thioadenosine binding site. Spermidine is bound by residues H64 and D88. S-methyl-5'-thioadenosine contacts are provided by residues E108 and 140–141 (DG). D158 acts as the Proton acceptor in catalysis. 158–161 (DCTD) contributes to the spermidine binding site. P165 serves as a coordination point for S-methyl-5'-thioadenosine.

This sequence belongs to the spermidine/spermine synthase family. In terms of assembly, homodimer or homotetramer.

The protein localises to the cytoplasm. The catalysed reaction is S-adenosyl 3-(methylsulfanyl)propylamine + putrescine = S-methyl-5'-thioadenosine + spermidine + H(+). The protein operates within amine and polyamine biosynthesis; spermidine biosynthesis; spermidine from putrescine: step 1/1. Its function is as follows. Catalyzes the irreversible transfer of a propylamine group from the amino donor S-adenosylmethioninamine (decarboxy-AdoMet) to putrescine (1,4-diaminobutane) to yield spermidine. The chain is Polyamine aminopropyltransferase from Serratia proteamaculans (strain 568).